A 193-amino-acid chain; its full sequence is Dual-action ribosomal maturation protein DarP (193 aa).

A compositionally biased stretch (basic and acidic residues) spans 1 to 10 (MRGRDEDTGE). 2 disordered regions span residues 1-20 (MRGRDEDTGEFRGASRSQQR) and 170-193 (SQKPGLESGDAGLEDEESASENDE). Acidic residues predominate over residues 181-193 (GLEDEESASENDE).

This sequence belongs to the DarP family.

It is found in the cytoplasm. In terms of biological role, member of a network of 50S ribosomal subunit biogenesis factors which assembles along the 30S-50S interface, preventing incorrect 23S rRNA structures from forming. Promotes peptidyl transferase center (PTC) maturation. In Xanthomonas campestris pv. campestris (strain 8004), this protein is Dual-action ribosomal maturation protein DarP.